A 129-amino-acid polypeptide reads, in one-letter code: Lysozyme C (129 aa).

Residues 1-129 enclose the C-type lysozyme domain; it reads KVYGRCELAA…VNAWTRGCRL (129 aa). Disulfide bonds link Cys6/Cys127, Cys30/Cys115, Cys64/Cys80, and Cys76/Cys94. Active-site residues include Glu35 and Asp52.

This sequence belongs to the glycosyl hydrolase 22 family. Monomer.

The protein resides in the secreted. It catalyses the reaction Hydrolysis of (1-&gt;4)-beta-linkages between N-acetylmuramic acid and N-acetyl-D-glucosamine residues in a peptidoglycan and between N-acetyl-D-glucosamine residues in chitodextrins.. Lysozymes have primarily a bacteriolytic function; those in tissues and body fluids are associated with the monocyte-macrophage system and enhance the activity of immunoagents. The sequence is that of Lysozyme C (LYZ) from Chrysolophus amherstiae (Lady Amherst's pheasant).